The following is a 240-amino-acid chain: MKINVLTLFPDMFTPLQVSMLGRGLEDKKWELNLVNFRDFTSDVHHHVDDTPYGGGAGMVLQIMPIKKALDSLTNKGKVIITAPQGKTFNEKMAQDWSKEENLTFICGHYEGFDQRIYDLADETVSIGDYVLTGGELPTMSMIDATVRLLPGILGNSASPVEESFSHGLLEYPQYTRPADFEGQKVPEVLTSGNHQKIAEWRHKEALRATYLYRPDMLADRELTDEEKRMLEEIKSEKEN.

S-adenosyl-L-methionine contacts are provided by residues glycine 108 and isoleucine 127–leucine 132.

The protein belongs to the RNA methyltransferase TrmD family. As to quaternary structure, homodimer.

It localises to the cytoplasm. It catalyses the reaction guanosine(37) in tRNA + S-adenosyl-L-methionine = N(1)-methylguanosine(37) in tRNA + S-adenosyl-L-homocysteine + H(+). Specifically methylates guanosine-37 in various tRNAs. The chain is tRNA (guanine-N(1)-)-methyltransferase from Lactobacillus johnsonii (strain CNCM I-12250 / La1 / NCC 533).